Consider the following 493-residue polypeptide: 3-octaprenyl-4-hydroxybenzoate carboxy-lyase (493 aa).

Position 177 (asparagine 177) interacts with Mn(2+). Prenylated FMN-binding positions include 180 to 182 (IYR), 194 to 196 (RWL), and 199 to 200 (RG). Position 243 (glutamate 243) interacts with Mn(2+). Residue aspartate 292 is the Proton donor of the active site.

Belongs to the UbiD family. As to quaternary structure, homohexamer. The cofactor is prenylated FMN. Mn(2+) is required as a cofactor.

Its subcellular location is the cell membrane. It catalyses the reaction a 4-hydroxy-3-(all-trans-polyprenyl)benzoate + H(+) = a 2-(all-trans-polyprenyl)phenol + CO2. It participates in cofactor biosynthesis; ubiquinone biosynthesis. Catalyzes the decarboxylation of 3-octaprenyl-4-hydroxy benzoate to 2-octaprenylphenol, an intermediate step in ubiquinone biosynthesis. This chain is 3-octaprenyl-4-hydroxybenzoate carboxy-lyase, found in Colwellia psychrerythraea (strain 34H / ATCC BAA-681) (Vibrio psychroerythus).